Reading from the N-terminus, the 476-residue chain is Ribulose bisphosphate carboxylase large chain (476 aa).

Substrate is bound by residues Asn124 and Thr174. The active-site Proton acceptor is the Lys176. A substrate-binding site is contributed by Lys178. Mg(2+) is bound by residues Lys202, Asp204, and Glu205. Residue Lys202 is modified to N6-carboxylysine. His295 acts as the Proton acceptor in catalysis. Residues Arg296, His328, and Ser380 each contribute to the substrate site.

This sequence belongs to the RuBisCO large chain family. Type I subfamily. As to quaternary structure, heterohexadecamer of 8 large chains and 8 small chains; disulfide-linked. The disulfide link is formed within the large subunit homodimers. Requires Mg(2+) as cofactor. In terms of processing, the disulfide bond which can form in the large chain dimeric partners within the hexadecamer appears to be associated with oxidative stress and protein turnover.

It is found in the carboxysome. It carries out the reaction 2 (2R)-3-phosphoglycerate + 2 H(+) = D-ribulose 1,5-bisphosphate + CO2 + H2O. It catalyses the reaction D-ribulose 1,5-bisphosphate + O2 = 2-phosphoglycolate + (2R)-3-phosphoglycerate + 2 H(+). Functionally, ruBisCO catalyzes two reactions: the carboxylation of D-ribulose 1,5-bisphosphate, the primary event in carbon dioxide fixation, as well as the oxidative fragmentation of the pentose substrate in the photorespiration process. Both reactions occur simultaneously and in competition at the same active site. The protein is Ribulose bisphosphate carboxylase large chain of Cyanothece sp. (strain PCC 7425 / ATCC 29141).